The primary structure comprises 83 residues: ATP synthase subunit c, chloroplastic (83 aa).

Helical transmembrane passes span 4-24 (IISA…AIGP) and 57-77 (LAFM…LLFA).

Belongs to the ATPase C chain family. As to quaternary structure, F-type ATPases have 2 components, F(1) - the catalytic core - and F(0) - the membrane proton channel. F(1) has five subunits: alpha(3), beta(3), gamma(1), delta(1), epsilon(1). F(0) has four main subunits: a(1), b(1), b'(1) and c(10-14). The alpha and beta chains form an alternating ring which encloses part of the gamma chain. F(1) is attached to F(0) by a central stalk formed by the gamma and epsilon chains, while a peripheral stalk is formed by the delta, b and b' chains.

It localises to the plastid. The protein resides in the chloroplast thylakoid membrane. Its function is as follows. F(1)F(0) ATP synthase produces ATP from ADP in the presence of a proton or sodium gradient. F-type ATPases consist of two structural domains, F(1) containing the extramembraneous catalytic core and F(0) containing the membrane proton channel, linked together by a central stalk and a peripheral stalk. During catalysis, ATP synthesis in the catalytic domain of F(1) is coupled via a rotary mechanism of the central stalk subunits to proton translocation. Key component of the F(0) channel; it plays a direct role in translocation across the membrane. A homomeric c-ring of between 10-14 subunits forms the central stalk rotor element with the F(1) delta and epsilon subunits. The sequence is that of ATP synthase subunit c, chloroplastic from Galdieria sulphuraria (Red alga).